Here is a 1029-residue protein sequence, read N- to C-terminus: Chitin synthase 3 (1029 aa).

Residues 1–29 (MAYYSRPASAGAARAQDDQDPYPYYPDPD) form a disordered region. The N-linked (GlcNAc...) asparagine glycan is linked to Asn37. Over residues 46 to 71 (ASGAASSASHTSPFSDAHAASASPAS) the composition is skewed to low complexity. Disordered stretches follow at residues 46 to 105 (ASGA…SRMP) and 168 to 209 (LAHR…AGTS). Residues 76 to 91 (SHQQVSAHAPQQQHMS) show a composition bias toward polar residues. The segment covering 191 to 202 (AHDEKYAYDRPD) has biased composition (basic and acidic residues). Residues Asn401, Asn514, Asn527, and Asn689 are each glycosylated (N-linked (GlcNAc...) asparagine). Transmembrane regions (helical) follow at residues 723–743 (FYSF…YIFF), 760–780 (IGVF…SSFI), 796–816 (AAVV…VLCL), 830–850 (AQMV…SLLA), 860–880 (FLQY…YAFC), 963–983 (VVLA…NGDA), and 998–1018 (VYMV…FIGS).

This sequence belongs to the chitin synthase family. Class I subfamily.

It localises to the cell membrane. The protein localises to the cytoplasmic vesicle membrane. It catalyses the reaction [(1-&gt;4)-N-acetyl-beta-D-glucosaminyl](n) + UDP-N-acetyl-alpha-D-glucosamine = [(1-&gt;4)-N-acetyl-beta-D-glucosaminyl](n+1) + UDP + H(+). In terms of biological role, polymerizes chitin, a structural polymer of the cell wall and septum, by transferring the sugar moiety of UDP-GlcNAc to the non-reducing end of the growing chitin polymer. This Mycosarcoma maydis (Corn smut fungus) protein is Chitin synthase 3.